The chain runs to 592 residues: Protein kinase C zeta type (592 aa).

The PB1 domain maps to 15 to 98 (RVRLKAHYGG…EGLIIHVFPS (84 aa)). The segment at 79–145 (AFRLARQCRD…KRFNRRAYCG (67 aa)) is interaction with SQSTM1. The Phorbol-ester/DAG-type zinc-finger motif lies at 130 to 180 (GHLFQAKRFNRRAYCGQCSERIWGLARQGYRCINCKLLVHKRCHGLVPLTC). Residues 252–518 (FDLIRVIGRG…FSDIKSHAFF (267 aa)) enclose the Protein kinase domain. ATP contacts are provided by residues 258-266 (IGRGSYAKV) and Lys-281. Asp-376 functions as the Proton acceptor in the catalytic mechanism. Thr-410 carries the phosphothreonine; by PDPK1 and PI3K modification. The 72-residue stretch at 519-590 (RSIDWDLLEK…INPLLLSTEE (72 aa)) folds into the AGC-kinase C-terminal domain. Thr-560 is subject to Phosphothreonine. Residue Ser-591 is modified to Phosphoserine.

Belongs to the protein kinase superfamily. AGC Ser/Thr protein kinase family. PKC subfamily. In terms of assembly, forms a ternary complex with SQSTM1 and KCNAB2. Forms another ternary complex with SQSTM1 and GABRR3. Forms a complex with SQSTM1 and MAP2K5. Interacts with PARD6A, PARD6B, PARD6G and SQSTM1. Part of a complex with PARD3, PARD6A or PARD6B or PARD6G and CDC42 or RAC1. Interacts with ADAP1/CENTA1. Forms a ternary complex composed of SQSTM1 and PAWR. Interacts directly with SQSTM1. Interacts with IKBKB. Interacts (via the protein kinase domain) with WWC1. Forms a tripartite complex with WWC1 and DDR1, but predominantly in the absence of collagen. Component of the Par polarity complex, composed of at least phosphorylated PRKCZ, PARD3 and TIAM1. Interacts with PDPK1 (via N-terminal region). Interacts with WDFY2 (via WD repeats 1-3). Interacts with VAMP2. Forms a complex with WDFY2 and VAMP2. Interacts with APPL1. Interacts with WWC1, WWC2 and WWC3. CDH5 is required for its phosphorylation at Thr-410. Phosphorylated by protein kinase PDPK1; phosphorylation is inhibited by the apoptotic C-terminal cleavage product of PKN2. Phosphorylation at Thr-410 by PI3K activates the kinase. As to expression, expressed in brain, and to a lesser extent in lung, kidney and testis.

Its subcellular location is the cytoplasm. It is found in the endosome. The protein localises to the cell junction. The protein resides in the membrane. It carries out the reaction L-seryl-[protein] + ATP = O-phospho-L-seryl-[protein] + ADP + H(+). It catalyses the reaction L-threonyl-[protein] + ATP = O-phospho-L-threonyl-[protein] + ADP + H(+). With respect to regulation, atypical PKCs (PRKCI and PRKCZ) exhibit an elevated basal enzymatic activity (that may be due to the interaction with SMG1 or SQSTM1) and are not regulated by diacylglycerol, phosphatidylserine, phorbol esters or calcium ions. Two specific sites, Thr-410 (activation loop of the kinase domain) and Thr-560 (turn motif), need to be phosphorylated for its full activation. Phosphatidylinositol 3,4,5-trisphosphate might be a physiological activator. Isoform 2: Constitutively active. Its function is as follows. Calcium- and diacylglycerol-independent serine/threonine-protein kinase that functions in phosphatidylinositol 3-kinase (PI3K) pathway and mitogen-activated protein (MAP) kinase cascade, and is involved in NF-kappa-B activation, mitogenic signaling, cell proliferation, cell polarity, inflammatory response and maintenance of long-term potentiation (LTP). Upon lipopolysaccharide (LPS) treatment in macrophages, or following mitogenic stimuli, functions downstream of PI3K to activate MAP2K1/MEK1-MAPK1/ERK2 signaling cascade independently of RAF1 activation. Required for insulin-dependent activation of AKT3, but may function as an adapter rather than a direct activator. Upon insulin treatment may act as a downstream effector of PI3K and contribute to the activation of translocation of the glucose transporter SLC2A4/GLUT4 and subsequent glucose transport in adipocytes. In EGF-induced cells, binds and activates MAP2K5/MEK5-MAPK7/ERK5 independently of its kinase activity and can activate JUN promoter through MEF2C. Through binding with SQSTM1/p62, functions in interleukin-1 signaling and activation of NF-kappa-B with the specific adapters RIPK1 and TRAF6. Participates in TNF-dependent transactivation of NF-kappa-B by phosphorylating and activating IKBKB kinase, which in turn leads to the degradation of NF-kappa-B inhibitors. In migrating astrocytes, forms a cytoplasmic complex with PARD6A and is recruited by CDC42 to function in the establishment of cell polarity along with the microtubule motor and dynein. In association with FEZ1, stimulates neuronal differentiation in PC12 cells. In the inflammatory response, is required for the T-helper 2 (Th2) differentiation process, including interleukin production, efficient activation of JAK1 and the subsequent phosphorylation and nuclear translocation of STAT6. May be involved in development of allergic airway inflammation (asthma), a process dependent on Th2 immune response. In the NF-kappa-B-mediated inflammatory response, can relieve SETD6-dependent repression of NF-kappa-B target genes by phosphorylating the RELA subunit at 'Ser-311'. Phosphorylates VAMP2 in vitro. Phosphorylates and activates LRRK1, which phosphorylates RAB proteins involved in intracellular trafficking. In terms of biological role, involved in late synaptic long term potention phase in CA1 hippocampal cells and long term memory maintenance. The sequence is that of Protein kinase C zeta type (PRKCZ) from Homo sapiens (Human).